The sequence spans 508 residues: Glutamyl-tRNA(Gln) amidotransferase subunit B, mitochondrial (508 aa).

The protein belongs to the GatB/GatE family. GatB subfamily. In terms of assembly, subunit of the heterotrimeric GatFAB amidotransferase (AdT) complex, composed of A, B and F subunits.

The protein localises to the mitochondrion. It catalyses the reaction L-glutamyl-tRNA(Gln) + L-glutamine + ATP + H2O = L-glutaminyl-tRNA(Gln) + L-glutamate + ADP + phosphate + H(+). In terms of biological role, allows the formation of correctly charged Gln-tRNA(Gln) through the transamidation of misacylated Glu-tRNA(Gln) in the mitochondria. The reaction takes place in the presence of glutamine and ATP through an activated gamma-phospho-Glu-tRNA(Gln). This Scheffersomyces stipitis (strain ATCC 58785 / CBS 6054 / NBRC 10063 / NRRL Y-11545) (Yeast) protein is Glutamyl-tRNA(Gln) amidotransferase subunit B, mitochondrial.